Here is a 396-residue protein sequence, read N- to C-terminus: 1-deoxy-D-xylulose 5-phosphate reductoisomerase (396 aa).

5 residues coordinate NADPH: Thr13, Gly14, Ser15, Ile16, and Asn127. Lys128 is a 1-deoxy-D-xylulose 5-phosphate binding site. Glu129 contributes to the NADPH binding site. A Mn(2+)-binding site is contributed by Asp153. Positions 154, 155, 184, and 207 each coordinate 1-deoxy-D-xylulose 5-phosphate. Glu155 contacts Mn(2+). Gly213 is an NADPH binding site. Ser220, Asn225, Lys226, and Glu229 together coordinate 1-deoxy-D-xylulose 5-phosphate. A Mn(2+)-binding site is contributed by Glu229.

The protein belongs to the DXR family. Mg(2+) is required as a cofactor. Mn(2+) serves as cofactor.

It catalyses the reaction 2-C-methyl-D-erythritol 4-phosphate + NADP(+) = 1-deoxy-D-xylulose 5-phosphate + NADPH + H(+). It functions in the pathway isoprenoid biosynthesis; isopentenyl diphosphate biosynthesis via DXP pathway; isopentenyl diphosphate from 1-deoxy-D-xylulose 5-phosphate: step 1/6. Inhibited by fosmidomycin and 3-(N-acetyl-N-hydroxyamino)-propylphosphonic acid (FR-900098). Functionally, catalyzes the NADPH-dependent rearrangement and reduction of 1-deoxy-D-xylulose-5-phosphate (DXP) to 2-C-methyl-D-erythritol 4-phosphate (MEP). The sequence is that of 1-deoxy-D-xylulose 5-phosphate reductoisomerase from Pseudomonas aeruginosa (strain ATCC 15692 / DSM 22644 / CIP 104116 / JCM 14847 / LMG 12228 / 1C / PRS 101 / PAO1).